The chain runs to 357 residues: Histidinol-phosphate aminotransferase (357 aa).

Lys218 is subject to N6-(pyridoxal phosphate)lysine.

This sequence belongs to the class-II pyridoxal-phosphate-dependent aminotransferase family. Histidinol-phosphate aminotransferase subfamily. In terms of assembly, homodimer. Pyridoxal 5'-phosphate is required as a cofactor.

It catalyses the reaction L-histidinol phosphate + 2-oxoglutarate = 3-(imidazol-4-yl)-2-oxopropyl phosphate + L-glutamate. It participates in amino-acid biosynthesis; L-histidine biosynthesis; L-histidine from 5-phospho-alpha-D-ribose 1-diphosphate: step 7/9. The sequence is that of Histidinol-phosphate aminotransferase from Prosthecochloris aestuarii (strain DSM 271 / SK 413).